Here is a 75-residue protein sequence, read N- to C-terminus: MKLLLFTALVLVVISLIEVEAENERACIPLEKECTKTPGNCCSGLKCDCYRRFEQGVAKGIQCWCIEEDVTYKGV.

A signal peptide spans 1 to 21 (MKLLLFTALVLVVISLIEVEA). Positions 22–25 (ENER) are excised as a propeptide.

The protein belongs to the neurotoxin 19 (CSTX) family. 06 (U6-Lctx) subfamily. In terms of processing, contains 4 disulfide bonds. As to expression, expressed by the venom gland.

The protein resides in the secreted. The polypeptide is U6-lycotoxin-Ls1a (Lycosa singoriensis (Wolf spider)).